A 487-amino-acid polypeptide reads, in one-letter code: N-succinylglutamate 5-semialdehyde dehydrogenase (487 aa).

A disordered region spans residues 1–23 (MTHFIKGQWQAGKGHDVTSSNPA). An NAD(+)-binding site is contributed by 220–225 (GSSRTG). Catalysis depends on residues glutamate 243 and cysteine 277.

Belongs to the aldehyde dehydrogenase family. AstD subfamily.

It catalyses the reaction N-succinyl-L-glutamate 5-semialdehyde + NAD(+) + H2O = N-succinyl-L-glutamate + NADH + 2 H(+). It participates in amino-acid degradation; L-arginine degradation via AST pathway; L-glutamate and succinate from L-arginine: step 4/5. In terms of biological role, catalyzes the NAD-dependent reduction of succinylglutamate semialdehyde into succinylglutamate. In Shewanella sp. (strain ANA-3), this protein is N-succinylglutamate 5-semialdehyde dehydrogenase.